We begin with the raw amino-acid sequence, 318 residues long: MIDRIPVPFLNPLFKFLFNREWDGPSTFSILMMIGFLTASYLLPKELKRRKLEPEHSDWLLLLGILGTLVGAKIFFVFEIWDQIFVETPGFDGKYIYPLTHWYGFPGRMSLWDNLFSGSGLVFYGGFLFGILFITLYMKYFQLDIASYLDAAVPSMAIGYAIGRLGCWVSGDGCYGFATNVEIPLLVFNYHGAHPSGVPVWNTPLIESIISFLFFFYFQFWARNQNFKKFSIGAQYLVLHGFARLLVEFLRVNKAVFPLMDPPAFVNIPNAEQNPEFLTQYYWHGFSQSQLVSIIIILVGAFFILKWKLWKKENTSNI.

Helical transmembrane passes span 24-44 (GPST…YLLP), 60-80 (LLLL…VFEI), and 115-135 (LFSG…LFIT). R164 is an a 1,2-diacyl-sn-glycero-3-phospho-(1'-sn-glycerol) binding site. The next 2 membrane-spanning stretches (helical) occupy residues 198-218 (VPVW…FFYF) and 285-305 (GFSQ…FFIL).

The protein belongs to the Lgt family.

It localises to the cell inner membrane. It catalyses the reaction L-cysteinyl-[prolipoprotein] + a 1,2-diacyl-sn-glycero-3-phospho-(1'-sn-glycerol) = an S-1,2-diacyl-sn-glyceryl-L-cysteinyl-[prolipoprotein] + sn-glycerol 1-phosphate + H(+). It functions in the pathway protein modification; lipoprotein biosynthesis (diacylglyceryl transfer). Its function is as follows. Catalyzes the transfer of the diacylglyceryl group from phosphatidylglycerol to the sulfhydryl group of the N-terminal cysteine of a prolipoprotein, the first step in the formation of mature lipoproteins. This Leptospira interrogans serogroup Icterohaemorrhagiae serovar copenhageni (strain Fiocruz L1-130) protein is Phosphatidylglycerol--prolipoprotein diacylglyceryl transferase.